A 413-amino-acid chain; its full sequence is Cardiolipin synthase B (413 aa).

2 consecutive PLD phosphodiesterase domains span residues 108-135 (VFRRMHRKIVVIDARIAFIGGLNYSAEH) and 285-312 (RRRPLHGKVALMDDHWATVGSSNLDPLS). Catalysis depends on residues His-113, Lys-115, Asp-120, His-290, Lys-292, and Asp-297. The segment at 390 to 413 (VGPPAQPTMETQDRVETENTGVKP) is disordered.

It belongs to the phospholipase D family. Cardiolipin synthase subfamily. ClsB sub-subfamily.

It is found in the cell membrane. It catalyses the reaction 2 a 1,2-diacyl-sn-glycero-3-phospho-(1'-sn-glycerol) = a cardiolipin + glycerol. Functionally, catalyzes the phosphatidyl group transfer from one phosphatidylglycerol molecule to another to form cardiolipin (CL) (diphosphatidylglycerol) and glycerol. The chain is Cardiolipin synthase B from Escherichia coli O6:H1 (strain CFT073 / ATCC 700928 / UPEC).